Consider the following 352-residue polypeptide: Glycerol-1-phosphate dehydrogenase [NAD(P)+] (352 aa).

Residues 98-102 (GKAID) and 120-123 (TAAS) each bind NAD(+). Substrate is bound at residue Asp-125. Ser-129 contacts NAD(+). A substrate-binding site is contributed by Asp-172. Residues Asp-172 and His-252 each coordinate Zn(2+). Residue His-256 participates in substrate binding. His-268 serves as a coordination point for Zn(2+).

Belongs to the glycerol-1-phosphate dehydrogenase family. The cofactor is Zn(2+).

Its subcellular location is the cytoplasm. It carries out the reaction sn-glycerol 1-phosphate + NAD(+) = dihydroxyacetone phosphate + NADH + H(+). The catalysed reaction is sn-glycerol 1-phosphate + NADP(+) = dihydroxyacetone phosphate + NADPH + H(+). Its pathway is membrane lipid metabolism; glycerophospholipid metabolism. Its function is as follows. Catalyzes the NAD(P)H-dependent reduction of dihydroxyacetonephosphate (DHAP or glycerone phosphate) to glycerol 1-phosphate (G1P). The G1P thus generated is used as the glycerophosphate backbone of phospholipids in the cellular membranes of Archaea. This Haloarcula marismortui (strain ATCC 43049 / DSM 3752 / JCM 8966 / VKM B-1809) (Halobacterium marismortui) protein is Glycerol-1-phosphate dehydrogenase [NAD(P)+].